We begin with the raw amino-acid sequence, 475 residues long: MPGVSAHGLSCEERRQLAVDLTRVLALYRSILDAYIIEFFTDSLWGTLPHAWQEVLDGLNPPELATLLLGMPREGEEIRYRSVWPLTLLALKSTACALAFTRTPGFHTPSEFLENPSQSSRLTAPFRKHVKPKKQHEIRRLGELVKKLSDLTGCTQVVDVGSGQGHLSRFMSLGLGLMVKSLEGNKRLVARAQRLDQELLQALDKMEKRHPKMVQRSPRHRPHHVVQWVSPTTLCEELLLPLEMPGQSSTRLLLTGLHACGDLSVALLRHFCCCPEVVALASVGCCYMKLSDPGSYPLSQWVAGLPGHELPYRLREGACHALEDYAERLQKAGPGLQTHCFRAALEAVIRQVCPELRRPGVQGIPRVHELKIEEYVQQGLQRVGLDPQLPLDQAALQAHQAQENRVVAFFSLALLLAPLVETLILLDRMLYLQEQGFYAELLPIFSPELSPRNLVLVATKTPLGQAFSILETEDS.

A coiled-coil region spans residues 185 to 210 (NKRLVARAQRLDQELLQALDKMEKRH). The chain crosses the membrane as a helical span at residues 406–426 (VVAFFSLALLLAPLVETLILL).

This sequence belongs to the METTL25 family.

Its subcellular location is the membrane. This Rattus norvegicus (Rat) protein is Methyltransferase-like protein 25B.